The primary structure comprises 446 residues: Protein odr-4 homolog (446 aa).

2 helical membrane passes run 81-101 (MLPGGLLVLSVFIIATPELSK) and 424-444 (MGVVIAVAVAVFASIFSFNYF).

This sequence belongs to the ODR-4 family.

The protein resides in the membrane. In terms of biological role, may play a role in the trafficking of a subset of G-protein coupled receptors. The chain is Protein odr-4 homolog (ODR4) from Gallus gallus (Chicken).